We begin with the raw amino-acid sequence, 101 residues long: B3 domain-containing protein At1g08985 (101 aa).

The segment at residues 7 to 101 is a DNA-binding region (TF-B3); that stretch reads IVKTLSETDC…WQNTKFIFSM (95 aa).

It localises to the nucleus. This Arabidopsis thaliana (Mouse-ear cress) protein is B3 domain-containing protein At1g08985.